Consider the following 270-residue polypeptide: Probable septum site-determining protein MinC (270 aa).

The protein belongs to the MinC family. In terms of assembly, interacts with MinD and FtsZ.

Its function is as follows. Cell division inhibitor that blocks the formation of polar Z ring septums. Rapidly oscillates between the poles of the cell to destabilize FtsZ filaments that have formed before they mature into polar Z rings. Prevents FtsZ polymerization. This is Probable septum site-determining protein MinC from Cupriavidus necator (strain ATCC 17699 / DSM 428 / KCTC 22496 / NCIMB 10442 / H16 / Stanier 337) (Ralstonia eutropha).